The primary structure comprises 459 residues: Bifunctional protein GlmU (459 aa).

A pyrophosphorylase region spans residues 1–229 (MSNFAIILAA…FDESLGVNDR (229 aa)). UDP-N-acetyl-alpha-D-glucosamine contacts are provided by residues 8–11 (LAAG), lysine 22, glutamine 72, and 77–78 (GT). Mg(2+) is bound at residue aspartate 102. UDP-N-acetyl-alpha-D-glucosamine-binding residues include glycine 139, glutamate 154, asparagine 169, and asparagine 227. Asparagine 227 is a binding site for Mg(2+). The segment at 230-250 (VALATAESVMRRRINHKHMVN) is linker. Residues 251–459 (GVSFVNPEAT…TRLPHHPKNQ (209 aa)) form an N-acetyltransferase region. UDP-N-acetyl-alpha-D-glucosamine is bound by residues arginine 332 and lysine 350. Histidine 362 (proton acceptor) is an active-site residue. Positions 365 and 376 each coordinate UDP-N-acetyl-alpha-D-glucosamine. Acetyl-CoA-binding positions include alanine 379, 385-386 (NY), serine 404, alanine 422, and arginine 439.

In the N-terminal section; belongs to the N-acetylglucosamine-1-phosphate uridyltransferase family. This sequence in the C-terminal section; belongs to the transferase hexapeptide repeat family. In terms of assembly, homotrimer. The cofactor is Mg(2+).

The protein localises to the cytoplasm. The enzyme catalyses alpha-D-glucosamine 1-phosphate + acetyl-CoA = N-acetyl-alpha-D-glucosamine 1-phosphate + CoA + H(+). It catalyses the reaction N-acetyl-alpha-D-glucosamine 1-phosphate + UTP + H(+) = UDP-N-acetyl-alpha-D-glucosamine + diphosphate. The protein operates within nucleotide-sugar biosynthesis; UDP-N-acetyl-alpha-D-glucosamine biosynthesis; N-acetyl-alpha-D-glucosamine 1-phosphate from alpha-D-glucosamine 6-phosphate (route II): step 2/2. It participates in nucleotide-sugar biosynthesis; UDP-N-acetyl-alpha-D-glucosamine biosynthesis; UDP-N-acetyl-alpha-D-glucosamine from N-acetyl-alpha-D-glucosamine 1-phosphate: step 1/1. Its pathway is bacterial outer membrane biogenesis; LPS lipid A biosynthesis. Functionally, catalyzes the last two sequential reactions in the de novo biosynthetic pathway for UDP-N-acetylglucosamine (UDP-GlcNAc). The C-terminal domain catalyzes the transfer of acetyl group from acetyl coenzyme A to glucosamine-1-phosphate (GlcN-1-P) to produce N-acetylglucosamine-1-phosphate (GlcNAc-1-P), which is converted into UDP-GlcNAc by the transfer of uridine 5-monophosphate (from uridine 5-triphosphate), a reaction catalyzed by the N-terminal domain. This Streptococcus pneumoniae serotype 2 (strain D39 / NCTC 7466) protein is Bifunctional protein GlmU.